The following is a 159-amino-acid chain: 2-C-methyl-D-erythritol 2,4-cyclodiphosphate synthase (159 aa).

A divalent metal cation-binding residues include Asp8 and His10. 4-CDP-2-C-methyl-D-erythritol 2-phosphate-binding positions include 8–10 (DVH) and 34–35 (HS). Position 42 (His42) interacts with a divalent metal cation. Residues 56-58 (DIG), 61-65 (FPDTD), 100-106 (AQAPKML), 132-135 (TTTE), Phe139, and Arg142 each bind 4-CDP-2-C-methyl-D-erythritol 2-phosphate.

This sequence belongs to the IspF family. As to quaternary structure, homotrimer. The cofactor is a divalent metal cation.

The catalysed reaction is 4-CDP-2-C-methyl-D-erythritol 2-phosphate = 2-C-methyl-D-erythritol 2,4-cyclic diphosphate + CMP. It functions in the pathway isoprenoid biosynthesis; isopentenyl diphosphate biosynthesis via DXP pathway; isopentenyl diphosphate from 1-deoxy-D-xylulose 5-phosphate: step 4/6. In terms of biological role, involved in the biosynthesis of isopentenyl diphosphate (IPP) and dimethylallyl diphosphate (DMAPP), two major building blocks of isoprenoid compounds. Catalyzes the conversion of 4-diphosphocytidyl-2-C-methyl-D-erythritol 2-phosphate (CDP-ME2P) to 2-C-methyl-D-erythritol 2,4-cyclodiphosphate (ME-CPP) with a corresponding release of cytidine 5-monophosphate (CMP). The polypeptide is 2-C-methyl-D-erythritol 2,4-cyclodiphosphate synthase (Citrobacter koseri (strain ATCC BAA-895 / CDC 4225-83 / SGSC4696)).